A 256-amino-acid polypeptide reads, in one-letter code: uncharacterized protein (256 aa).

The next 4 helical transmembrane spans lie at 5–25, 30–50, 64–84, and 105–125; these read FIEG…NYLL, ILST…LKVF, VVIF…DPAI, and VGIT…LGII. A disordered region spans residues 198-256; it reads EKTKSLDSISHSSSSSRKSSTELKIPPVETRIVAEIPVPSSVKRRRHRPNKSMGSIKNS. Residues 203-215 show a composition bias toward low complexity; the sequence is LDSISHSSSSSRK. Residues Ser210 and Ser211 each carry the phosphoserine modification.

The protein localises to the endoplasmic reticulum membrane. Its subcellular location is the nucleus membrane. This is an uncharacterized protein from Schizosaccharomyces pombe (strain 972 / ATCC 24843) (Fission yeast).